The sequence spans 105 residues: Larval cuticle protein 65Ag1 (105 aa).

The signal sequence occupies residues 1–18 (MKFLIVFVALFAVALAAP). Positions 34–103 (PESFKYDWET…PQGAHLPVAP (70 aa)) constitute a Chitin-binding type R&amp;R domain.

Component of the cuticle of the larva. This chain is Larval cuticle protein 65Ag1, found in Drosophila melanogaster (Fruit fly).